The chain runs to 391 residues: Inositol-tetrakisphosphate 1-kinase 2 (391 aa).

The 1D-myo-inositol 1,3,4-trisphosphate site is built by K90 and K132. Residues R167 and K217 each contribute to the ATP site. Residues 178–384 (KLSDCSGSLF…FFQNLAQVKY (207 aa)) enclose the ATP-grasp domain. 2 residues coordinate 1D-myo-inositol 1,3,4-trisphosphate: H228 and K260. ATP-binding positions include 249–260 (QEFVNHGGVMFK) and S275. Mg(2+)-binding residues include D340, D355, and N357. Residue N357 participates in 1D-myo-inositol 1,3,4-trisphosphate binding.

It belongs to the ITPK1 family. Monomer. Requires Mg(2+) as cofactor. In terms of tissue distribution, expressed in seedling roots, cotyledons, rosette leaves, cauline leaves, stems, flowers, siliques and seeds.

The enzyme catalyses 1D-myo-inositol 3,4,5,6-tetrakisphosphate + ATP = 1D-myo-inositol 1,3,4,5,6-pentakisphosphate + ADP + H(+). The catalysed reaction is 1D-myo-inositol 1,3,4-trisphosphate + ATP = 1D-myo-inositol 1,3,4,5-tetrakisphosphate + ADP + H(+). It carries out the reaction 1D-myo-inositol 1,3,4-trisphosphate + ATP = 1D-myo-inositol 1,3,4,6-tetrakisphosphate + ADP + H(+). Kinase that can phosphorylate various inositol polyphosphate such as Ins(3,4,5,6)P4 or Ins(1,3,4)P3. Phosphorylates Ins(3,4,5,6)P4 to form InsP5. This reaction is thought to have regulatory importance, since Ins(3,4,5,6)P4 is an inhibitor of plasma membrane Ca(2+)-activated Cl(-) channels, while Ins(1,3,4,5,6)P5 is not. Also phosphorylates Ins(1,3,4)P3 or a racemic mixture of Ins(1,4,6)P3 and Ins(3,4,6)P3 to form InsP4. Ins(1,3,4,6)P4 is an essential molecule in the hexakisphosphate (InsP6) pathway. Plays a role in seed coat development and lipid polyester barrier formation. In Arabidopsis thaliana (Mouse-ear cress), this protein is Inositol-tetrakisphosphate 1-kinase 2 (ITPK2).